A 442-amino-acid chain; its full sequence is UDP-N-acetylmuramate--L-alanine ligase (442 aa).

Position 109-115 (109-115 (GAHGKTS)) interacts with ATP.

It belongs to the MurCDEF family.

It is found in the cytoplasm. It carries out the reaction UDP-N-acetyl-alpha-D-muramate + L-alanine + ATP = UDP-N-acetyl-alpha-D-muramoyl-L-alanine + ADP + phosphate + H(+). Its pathway is cell wall biogenesis; peptidoglycan biosynthesis. In terms of biological role, cell wall formation. The polypeptide is UDP-N-acetylmuramate--L-alanine ligase (Streptococcus pyogenes serotype M18 (strain MGAS8232)).